Reading from the N-terminus, the 150-residue chain is Photosystem II extrinsic protein V (150 aa).

Positions 1–20 (MIRVIMLLVLVWMTPMISWA) are cleaved as a signal peptide. Heme c contacts are provided by cysteine 50, cysteine 53, histidine 54, and histidine 105.

The protein belongs to the cytochrome c family. PsbV subfamily. In terms of assembly, PSII is composed of 1 copy each of membrane proteins PsbA, PsbB, PsbC, PsbD, PsbE, PsbF, PsbH, PsbI, PsbJ, PsbK, PsbL, PsbM, PsbT, PsbY, PsbZ, Psb30/Ycf12, at least 3 peripheral proteins of the oxygen-evolving complex and a large number of cofactors. It forms dimeric complexes. The extrinsic subunits in red algae are PsbO (OEC33), PsbQ', cytochrome c-550 and PsbU. The cofactor is heme c.

It is found in the plastid. The protein resides in the chloroplast thylakoid membrane. Its function is as follows. One of the extrinsic, lumenal subunits of photosystem II (PSII). PSII is a light-driven water plastoquinone oxidoreductase, using light energy to abstract electrons from H(2)O, generating a proton gradient subsequently used for ATP formation. The extrinsic proteins stabilize the structure of photosystem II oxygen-evolving complex (OEC), the ion environment of oxygen evolution and protect the OEC against heat-induced inactivation. This chain is Photosystem II extrinsic protein V, found in Cyanidioschyzon merolae (strain NIES-3377 / 10D) (Unicellular red alga).